Reading from the N-terminus, the 255-residue chain is uncharacterized protein (255 aa).

The region spanning 4–59 (RNERLNLIRKRVDQYGQVAVKDLAIFLQVTPETVRKDLETLENDKLITRTHGGAIQ) is the HTH deoR-type domain. The H-T-H motif DNA-binding region spans 21-40 (VAVKDLAIFLQVTPETVRKD).

This is an uncharacterized protein from Staphylococcus epidermidis (strain ATCC 12228 / FDA PCI 1200).